We begin with the raw amino-acid sequence, 1312 residues long: Cyclic GMP-binding protein D (1312 aa).

The N-terminal Ras-GEF domain occupies Gly-26–Arg-155. Composition is skewed to low complexity over residues Asn-206–Asn-236 and Asn-275–Gln-296. Disordered regions lie at residues Asn-206–Met-244 and Asn-260–Asn-326. Residues Gln-297–Gln-310 are compositionally biased toward polar residues. A compositionally biased stretch (low complexity) spans Asn-311–Asn-326. The region spanning Leu-353–Thr-582 is the Ras-GEF domain. The segment at Gln-586–Ser-658 is disordered. Over residues Ser-591–Asp-612 the composition is skewed to low complexity. Residues Gly-613–Ser-625 are compositionally biased toward gly residues. Residues Gly-630 to Gly-644 are compositionally biased toward basic and acidic residues. Over residues Gly-646–Ser-657 the composition is skewed to low complexity. Val-698–Ile-857 provides a ligand contact to a nucleoside 3',5'-cyclic phosphate. A GRAM domain is found at Ser-940 to Ile-1006. Low complexity predominate over residues Gln-1059–Thr-1087. Disordered stretches follow at residues Gln-1059–Leu-1108 and Asn-1167–Ile-1210. Residues Ile-1105–Ser-1218 and Asn-1182–Val-1303 contribute to the a nucleoside 3',5'-cyclic phosphate site.

Functionally, promotes the exchange of Ras-bound GDP by GTP. Induces the formation of substrate-attached pseudopodia, that leads to increased adhesion and thereby negatively influencing cell speed and polarity. This is Cyclic GMP-binding protein D (gbpD) from Dictyostelium discoideum (Social amoeba).